Here is a 176-residue protein sequence, read N- to C-terminus: MDLSEPIHDFLLVFLGSGLILGGLGVVLLPNPIYSAFSLGLVLICTSLFYILSNSYFVAAAQLLIYVGAINVLIIFAVMFMNGSEYYKDFHLWTVGDGITSMVCISLFISLITTISDTSWYGIIWTTRSNQIIEQDFLSNSQQIGIHLSTDFFLPFELISIILLVALIGAIAVARQ.

The next 5 membrane-spanning stretches (helical) occupy residues F10 to P30, P32 to L52, A61 to M81, L92 to I112, and F152 to A172.

This sequence belongs to the complex I subunit 6 family. NDH is composed of at least 16 different subunits, 5 of which are encoded in the nucleus.

It localises to the plastid. It is found in the chloroplast thylakoid membrane. The enzyme catalyses a plastoquinone + NADH + (n+1) H(+)(in) = a plastoquinol + NAD(+) + n H(+)(out). It catalyses the reaction a plastoquinone + NADPH + (n+1) H(+)(in) = a plastoquinol + NADP(+) + n H(+)(out). Its function is as follows. NDH shuttles electrons from NAD(P)H:plastoquinone, via FMN and iron-sulfur (Fe-S) centers, to quinones in the photosynthetic chain and possibly in a chloroplast respiratory chain. The immediate electron acceptor for the enzyme in this species is believed to be plastoquinone. Couples the redox reaction to proton translocation, and thus conserves the redox energy in a proton gradient. This chain is NAD(P)H-quinone oxidoreductase subunit 6, chloroplastic (ndhG), found in Solanum tuberosum (Potato).